Reading from the N-terminus, the 259-residue chain is Envelope biogenesis factor ElyC (259 aa).

The next 2 helical transmembrane spans lie at 12-32 and 39-59; these read MLLP…LLWF and GKIF…QPVA.

The protein resides in the cell inner membrane. Functionally, plays a critical role in the metabolism of the essential lipid carrier used for cell wall synthesis. The sequence is that of Envelope biogenesis factor ElyC (elyC) from Escherichia coli O157:H7.